A 57-amino-acid chain; its full sequence is Large ribosomal subunit protein bL33 (57 aa).

This sequence belongs to the bacterial ribosomal protein bL33 family.

The sequence is that of Large ribosomal subunit protein bL33 from Shewanella sp. (strain W3-18-1).